Here is a 774-residue protein sequence, read N- to C-terminus: Alpha,alpha-trehalose phosphorylase (774 aa).

369–370 (WD) contributes to the substrate binding site. E498 (proton donor) is an active-site residue. 610–611 (KQ) contributes to the substrate binding site.

This sequence belongs to the glycosyl hydrolase 65 family. In terms of assembly, homodimer.

The catalysed reaction is alpha,alpha-trehalose + phosphate = beta-D-glucose 1-phosphate + D-glucose. The protein operates within glycan degradation; trehalose degradation. Inhibited by Cu(2+), Hg(2+), Mg(2+), Mn(2+), Pb(2+) and Zn(2+). Functionally, catalyzes the reversible phosphorolytic cleavage of trehalose. Phosphorolysis is specific for trehalose, but D-xylose, D-galactose, L-arabinose, D-fucose, L-fucose, D-glucosamine and 2-deoxy D-glucose can act as substitutes for D-glucose in the synthetic reaction. This Thermoanaerobacter brockii (Thermoanaerobium brockii) protein is Alpha,alpha-trehalose phosphorylase (treP).